Reading from the N-terminus, the 704-residue chain is Polyribonucleotide nucleotidyltransferase (704 aa).

Mg(2+) contacts are provided by aspartate 490 and aspartate 496. The KH domain occupies 557–616 (PKIEMIQIKPAKIKDVIGKGGETINSIIDETGVKIDIDQDGNVSIASSDAEMIKKAIKII). Residues 626-694 (GQVYLAKVVR…KQGRVNVSRK (69 aa)) form the S1 motif domain.

It belongs to the polyribonucleotide nucleotidyltransferase family. It depends on Mg(2+) as a cofactor.

It is found in the cytoplasm. The catalysed reaction is RNA(n+1) + phosphate = RNA(n) + a ribonucleoside 5'-diphosphate. Involved in mRNA degradation. Catalyzes the phosphorolysis of single-stranded polyribonucleotides processively in the 3'- to 5'-direction. This chain is Polyribonucleotide nucleotidyltransferase, found in Enterococcus faecalis (strain ATCC 700802 / V583).